The sequence spans 975 residues: Cation-chloride cotransporter 1 (975 aa).

2 disordered regions span residues 1–29 and 104–124; these read MDSG…SKYR and EQIQ…TQGH. Residues 1 to 132 are Cytoplasmic-facing; that stretch reads MDSGDIEEAG…GHPKPPALKM (132 aa). A helical transmembrane segment spans residues 133 to 153; the sequence is GTMMGVFVPCLQNILGIIYYI. Over 154-167 the chain is Extracellular; that stretch reads RFTWIVGMAGIGQG. A helical membrane pass occupies residues 168 to 188; it reads LVLVFLCGLCTFLTTISLSAI. The Cytoplasmic segment spans residues 189-214; the sequence is ATNGAMKGGGPYYLIGRALGPEVGIS. The chain crosses the membrane as a helical span at residues 215-235; that stretch reads IGLCFFLGNAVAGALYVLGAV. Residues 236 to 273 lie on the Extracellular side of the membrane; it reads ETFLKAFPAAGIFRETITKVNGTAVSESIQSPNSHDLQ. N-linked (GlcNAc...) asparagine glycosylation is present at Asn256. A helical transmembrane segment spans residues 274–294; that stretch reads VYGIVVTILLCFIVFGGVKMI. Topologically, residues 295-296 are cytoplasmic; it reads NR. Residues 297-317 traverse the membrane as a helical segment; the sequence is VAPAFLVPVLLSIFCIFIGIF. The Extracellular segment spans residues 318–359; it reads LAKTDDPDNGITGLRLKSFKDNWGSAYQMTNDAGIPDPTGGT. The chain crosses the membrane as a helical span at residues 360–380; it reads YWSFNELVGLFFPAVTGIMAG. Residues 381–398 lie on the Cytoplasmic side of the membrane; sequence SNRSASLKDTQKSIPVGT. A helical transmembrane segment spans residues 399–419; that stretch reads LAATLTTTSLYLISVLFFGAV. At 420–434 the chain is on the extracellular side; that stretch reads ATRDKLLTDRLLTAT. The chain crosses the membrane as a helical span at residues 435–455; it reads IAWPFPAIVHVGIILSTLGAA. The Cytoplasmic portion of the chain corresponds to 456-490; it reads LQSLTGAPRLLAAIANDDILPILNYFKVADTSEPH. The chain crosses the membrane as a helical span at residues 491 to 511; the sequence is IATLFTAFICIGCVVIGNLDL. Residues 512 to 515 lie on the Extracellular side of the membrane; the sequence is ITPT. A helical transmembrane segment spans residues 516 to 536; that stretch reads VTMFYLLCYSGVNLSCFLLDL. The Cytoplasmic segment spans residues 537 to 544; sequence LDAPSWRP. Residues 545–565 traverse the membrane as a helical segment; that stretch reads RWKYHHWSLSFVGASLCIVIM. The Extracellular segment spans residues 566–571; that stretch reads FLISWS. A helical membrane pass occupies residues 572-592; the sequence is FTVVAIALASLIYKYVGLKGK. Residues 593–975 lie on the Cytoplasmic side of the membrane; that stretch reads AGDWGDGFKS…YHRDVVTLFT (383 aa).

It belongs to the SLC12A transporter family. Expressed in young seedlings cotyledon tips, plant vasculature, root tips and axillary buds. Expressed in root vascular strand in the pericycle and other parenchyma cells bordering xylem vessels. Expressed in the xylem/symplast boundaries of rosette stems, rosette leaves and cauline leaves. Expressed in stipules, trichomes and hydathodes. Expressed in pollen grains.

It localises to the membrane. In terms of biological role, cation/chloride cotransporter that mediates potassium-chloride and sodium-chloride cotransports. Involved in plant development and Cl(-) homeostasis. May be involved in long distance Cl(-) transport. Does not function as an H(+)-dependent cotransporter. In Arabidopsis thaliana (Mouse-ear cress), this protein is Cation-chloride cotransporter 1 (CCC1).